Consider the following 192-residue polypeptide: Xanthine phosphoribosyltransferase (192 aa).

The xanthine site is built by leucine 20 and asparagine 27. 128-132 is a binding site for 5-phospho-alpha-D-ribose 1-diphosphate; it reads ANGDA. Xanthine is bound at residue lysine 156.

This sequence belongs to the purine/pyrimidine phosphoribosyltransferase family. Xpt subfamily. As to quaternary structure, homodimer.

The protein resides in the cytoplasm. It catalyses the reaction XMP + diphosphate = xanthine + 5-phospho-alpha-D-ribose 1-diphosphate. Its pathway is purine metabolism; XMP biosynthesis via salvage pathway; XMP from xanthine: step 1/1. Converts the preformed base xanthine, a product of nucleic acid breakdown, to xanthosine 5'-monophosphate (XMP), so it can be reused for RNA or DNA synthesis. This is Xanthine phosphoribosyltransferase from Staphylococcus aureus (strain MRSA252).